The chain runs to 242 residues: Placenta-expressed transcript 1 protein (242 aa).

An N-terminal signal peptide occupies residues 1-26 (MAILRSLLLPLGLLLCLWLLCSPASC). The Extracellular segment spans residues 27 to 220 (TNSTTNCKPF…TTHKSSANRA (194 aa)). Residues Asn28, Asn81, and Asn106 are each glycosylated (N-linked (GlcNAc...) asparagine). The interval 162–209 (VITTPTHKPTPAPPKPTTNPQKTTTNHSIPTTSLPKPTTSLYTSHPKL) is disordered. Residues 169 to 178 (KPTPAPPKPT) are compositionally biased toward pro residues. The span at 179–205 (TNPQKTTTNHSIPTTSLPKPTTSLYTS) shows a compositional bias: low complexity. The chain crosses the membrane as a helical span at residues 221 to 241 (FLCPVREAIQILFIFLIGTLL). Phe242 is a topological domain (cytoplasmic).

Post-translationally, N-glycosylated.

It localises to the membrane. Its subcellular location is the apical cell membrane. In terms of biological role, modulates leading keratinocyte migration and cellular adhesion to matrix proteins during a wound-healing response and promotes wound repair. May play a role during trichilemmal differentiation of the hair follicle. This chain is Placenta-expressed transcript 1 protein (PLET1), found in Bos taurus (Bovine).